We begin with the raw amino-acid sequence, 152 residues long: Arginine repressor (152 aa).

The protein belongs to the ArgR family.

The protein localises to the cytoplasm. The protein operates within amino-acid biosynthesis; L-arginine biosynthesis [regulation]. In terms of biological role, regulates arginine biosynthesis genes. This chain is Arginine repressor, found in Thermotoga sp. (strain RQ2).